A 548-amino-acid polypeptide reads, in one-letter code: Synaptic vesicle 2-related protein (548 aa).

At 1–87 (MEEDLFQLRQ…GFGRFQWKLS (87 aa)) the chain is on the cytoplasmic side. Residues Ser25 and Ser31 each carry the phosphoserine modification. A helical membrane pass occupies residues 88 to 108 (VLTGLAWMADAMEMMILSILA). Residues 109-122 (PQLHCEWRLPSWQV) lie on the Vesicular side of the membrane. A helical transmembrane segment spans residues 123–143 (ALLTSVVFIGMMSSSTLWGNI). Residues 144 to 156 (SDQYGRKTGLKIS) are Cytoplasmic-facing. A helical transmembrane segment spans residues 157–177 (VFWTLYYGILSAFAPVYSWIL). Over 178–180 (VLR) the chain is Vesicular. The helical transmembrane segment at 181–201 (GLVGFGIGGVPQSVTLYAEFL) threads the bilayer. The Cytoplasmic segment spans residues 202–209 (PMKARAKC). Residues 210-230 (ILLIEVFWAIGTVFEVLLAVF) traverse the membrane as a helical segment. Residues 231–238 (VMPSLGWR) are Vesicular-facing. Residues 239-259 (WLLLLSAAPLLVFAVLCFWLP) form a helical membrane-spanning segment. The Cytoplasmic segment spans residues 260–316 (ESARYDVLSGNQEKAIATLKRIATENGAPMPLGKLIISRQEDRGKMRDLFTPHFRWT). The chain crosses the membrane as a helical span at residues 317-337 (TLLLWFIWFSNAFSYYGLVLL). Residues 338 to 373 (TTELFQAGDVCSISSRKKAVEAKCSLACEYLSKEDY) lie on the Vesicular side of the membrane. A helical transmembrane segment spans residues 374-394 (MDLLWTTLSEFPGVLVTLWVI). Over 395-401 (DRLGRKK) the chain is Cytoplasmic. Residues 402–422 (TMALCFVIFSLCSLLLFICIG) traverse the membrane as a helical segment. Residues 423-424 (RN) lie on the Vesicular side of the membrane. Residues 425–445 (VLTLLLFIARAFISGGFQAAY) traverse the membrane as a helical segment. Over 446–457 (VYTPEVYPTATR) the chain is Cytoplasmic. A helical membrane pass occupies residues 458-478 (ALGLGTCSGMARVGALITPFI). Over 479 to 489 (AQVMLESSVYL) the chain is Vesicular. Residues 490–510 (TLAVYSGCCLLAALASCFLPI) traverse the membrane as a helical segment. Residues 511-548 (ETKGRALQESSHREWGQEMVGRGTNSTGVPRSNSGSQE) lie on the Cytoplasmic side of the membrane. The interval 523 to 548 (REWGQEMVGRGTNSTGVPRSNSGSQE) is disordered. Positions 533–548 (GTNSTGVPRSNSGSQE) are enriched in polar residues. A Phosphoserine modification is found at Ser542.

This sequence belongs to the major facilitator superfamily. In terms of tissue distribution, detected in brain (at protein level). Detected in brain, in synaptic layers of the cerebellum, hippocampus and cerebral cortex.

The protein resides in the cytoplasmic vesicle. The protein localises to the secretory vesicle. It is found in the synaptic vesicle membrane. The chain is Synaptic vesicle 2-related protein (Svop) from Rattus norvegicus (Rat).